The sequence spans 298 residues: UPF0282 protein Kcr_0286 (298 aa).

This sequence belongs to the UPF0282 family.

This is UPF0282 protein Kcr_0286 from Korarchaeum cryptofilum (strain OPF8).